The chain runs to 489 residues: Ketol-acid reductoisomerase (NADP(+)) (489 aa).

One can recognise a KARI N-terminal Rossmann domain in the interval 17–208 (LGVCEFMEQS…GGHKAGVLRS (192 aa)). Residues 45–48 (CGAQ), Arg68, Arg76, Ser78, and 108–110 (DKQ) each bind NADP(+). The active site involves His132. Residue Gly158 participates in NADP(+) binding. KARI C-terminal knotted domains lie at 209–344 (SFVA…KTAP) and 345–485 (QEAP…MTAM). 4 residues coordinate Mg(2+): Asp217, Glu221, Glu389, and Glu393. Ser414 contacts substrate.

It belongs to the ketol-acid reductoisomerase family. It depends on Mg(2+) as a cofactor.

It catalyses the reaction (2R)-2,3-dihydroxy-3-methylbutanoate + NADP(+) = (2S)-2-acetolactate + NADPH + H(+). It carries out the reaction (2R,3R)-2,3-dihydroxy-3-methylpentanoate + NADP(+) = (S)-2-ethyl-2-hydroxy-3-oxobutanoate + NADPH + H(+). The protein operates within amino-acid biosynthesis; L-isoleucine biosynthesis; L-isoleucine from 2-oxobutanoate: step 2/4. It functions in the pathway amino-acid biosynthesis; L-valine biosynthesis; L-valine from pyruvate: step 2/4. Involved in the biosynthesis of branched-chain amino acids (BCAA). Catalyzes an alkyl-migration followed by a ketol-acid reduction of (S)-2-acetolactate (S2AL) to yield (R)-2,3-dihydroxy-isovalerate. In the isomerase reaction, S2AL is rearranged via a Mg-dependent methyl migration to produce 3-hydroxy-3-methyl-2-ketobutyrate (HMKB). In the reductase reaction, this 2-ketoacid undergoes a metal-dependent reduction by NADPH to yield (R)-2,3-dihydroxy-isovalerate. This is Ketol-acid reductoisomerase (NADP(+)) from Flavobacterium johnsoniae (strain ATCC 17061 / DSM 2064 / JCM 8514 / BCRC 14874 / CCUG 350202 / NBRC 14942 / NCIMB 11054 / UW101) (Cytophaga johnsonae).